Consider the following 214-residue polypeptide: Osteoclast-stimulating factor 1 (214 aa).

At serine 2 the chain carries N-acetylserine. The 60-residue stretch at glycine 12–glutamate 71 folds into the SH3 domain. 3 ANK repeats span residues serine 72–glycine 101, alanine 105–glutamine 135, and leucine 139–leucine 168. Threonine 200 is subject to Phosphothreonine. A phosphoserine mark is found at serine 202 and serine 213.

In terms of assembly, interacts with SRC and SMN1. Interacts with FASLG.

It is found in the cytoplasm. Induces bone resorption, acting probably through a signaling cascade which results in the secretion of factor(s) enhancing osteoclast formation and activity. The protein is Osteoclast-stimulating factor 1 (Ostf1) of Rattus norvegicus (Rat).